We begin with the raw amino-acid sequence, 566 residues long: ATP-dependent RNA helicase DBP3 (566 aa).

The tract at residues 1-139 (MSAGKKHARD…TTPNGSAQRN (139 aa)) is disordered. The span at 39 to 58 (DKKKKDKKDKKERKEKKEKK) shows a compositional bias: basic residues. Residues 81-91 (SEPKPEKEKKE) are compositionally biased toward basic and acidic residues. Positions 92 to 102 (KNNKKDKKDKK) are enriched in basic residues. A compositionally biased stretch (polar residues) spans 127–139 (AATTTPNGSAQRN). The Q motif signature appears at 182-209 (IHFSHLPTSTLTSKKPFASFTAPTPIQA). Residues 212-396 (WPFALSGRDV…EGFMIDPVKA (185 aa)) enclose the Helicase ATP-binding domain. 225–232 (AETGSGKT) contacts ATP. The DEAD box signature appears at 342–345 (DEAD). A Helicase C-terminal domain is found at 433–566 (GKEQRLLELL…TEHDKSHSGS (134 aa)).

It belongs to the DEAD box helicase family. DDX5/DBP2 subfamily.

It localises to the nucleus. The protein localises to the nucleolus. The catalysed reaction is ATP + H2O = ADP + phosphate + H(+). In terms of biological role, ATP-dependent RNA helicase required for 60S ribosomal subunit synthesis. Involved in efficient pre-rRNA processing, predominantly at site A3, which is necessary for the normal formation of 25S and 5.8S rRNAs. This Chaetomium globosum (strain ATCC 6205 / CBS 148.51 / DSM 1962 / NBRC 6347 / NRRL 1970) (Soil fungus) protein is ATP-dependent RNA helicase DBP3 (DBP3).